Consider the following 431-residue polypeptide: Protein S-Myc (431 aa).

Position 36 is a phosphotyrosine; by Tyr-kinases (Tyr36). A bHLH domain is found at Glu348–Leu400. A leucine-zipper region spans residues Leu400–Leu421.

Efficient DNA binding requires dimerization with another bHLH protein.

It localises to the nucleus. Its function is as follows. Has apoptosis-inducing activity. The protein is Protein S-Myc (Mycs) of Mus musculus (Mouse).